Reading from the N-terminus, the 614-residue chain is UvrABC system protein C (614 aa).

The GIY-YIG domain occupies Thr-14–Ile-91. In terms of domain architecture, UVR spans Asp-196–Leu-231. The tract at residues Leu-595–Pro-614 is disordered. The span at Ala-599–Pro-614 shows a compositional bias: basic and acidic residues.

Belongs to the UvrC family. As to quaternary structure, interacts with UvrB in an incision complex.

It is found in the cytoplasm. Functionally, the UvrABC repair system catalyzes the recognition and processing of DNA lesions. UvrC both incises the 5' and 3' sides of the lesion. The N-terminal half is responsible for the 3' incision and the C-terminal half is responsible for the 5' incision. In Streptococcus pneumoniae serotype 2 (strain D39 / NCTC 7466), this protein is UvrABC system protein C.